A 161-amino-acid polypeptide reads, in one-letter code: Globin CTT-VIIB-3 (161 aa).

Positions 1–16 (MKFFAVLALCIVGAIA) are cleaved as a signal peptide. The Globin domain occupies 18-161 (PLTADEASLV…NTYAIVVPRL (144 aa)). 2 residues coordinate heme b: His-76 and His-111.

The protein belongs to the globin family. Homodimer.

The sequence is that of Globin CTT-VIIB-3 (CTT-7B3) from Chironomus thummi thummi (Midge).